A 144-amino-acid chain; its full sequence is Histone H2B.2, sperm (144 aa).

The interval 1-51 (MPRSPAKTSPRKGSPRKGSPSRKASPKRGGKGAKRAGKGGRRRRVVKRRRR) is disordered. 5 short sequence motifs (SPKK motif) span residues 4–7 (SPAK), 9–12 (SPRK), 14–17 (SPRK), 19–22 (SPSR), and 25–28 (SPKR). Serine 14, serine 19, and serine 25 each carry phosphoserine. The span at 24–51 (ASPKRGGKGAKRAGKGGRRRRVVKRRRR) shows a compositional bias: basic residues. O-linked (GlcNAc) serine glycosylation occurs at serine 131. Lysine 139 participates in a covalent cross-link: Glycyl lysine isopeptide (Lys-Gly) (interchain with G-Cter in ubiquitin).

It belongs to the histone H2B family. The nucleosome is a histone octamer containing two molecules each of H2A, H2B, H3 and H4 assembled in one H3-H4 heterotetramer and two H2A-H2B heterodimers. The octamer wraps approximately 147 bp of DNA. In terms of processing, monoubiquitination of Lys-139 gives a specific tag for epigenetic transcriptional activation and is also prerequisite for histone H3 'Lys-4' and 'Lys-79' methylation. Post-translationally, phosphorylated on SPKK motifs 3, 4 and 5; which may regulate DNA binding. Dephosphorylated during maturation of spermatids to mature sperm and rephosphorylated at fertilization.

Its subcellular location is the nucleus. It localises to the chromosome. Functionally, core component of nucleosome. Nucleosomes wrap and compact DNA into chromatin, limiting DNA accessibility to the cellular machineries which require DNA as a template. Histones thereby play a central role in transcription regulation, DNA repair, DNA replication and chromosomal stability. DNA accessibility is regulated via a complex set of post-translational modifications of histones, also called histone code, and nucleosome remodeling. This is Histone H2B.2, sperm from Parechinus angulosus (Angulate sea urchin).